A 273-amino-acid chain; its full sequence is HMP-PP phosphatase (273 aa).

Residue Asp8 is the Nucleophile of the active site. Mg(2+) contacts are provided by Asp8, Asp10, and Asp212.

Belongs to the HAD-like hydrolase superfamily. Cof family. It depends on Mg(2+) as a cofactor.

It catalyses the reaction 4-amino-2-methyl-5-(diphosphooxymethyl)pyrimidine + H2O = 4-amino-2-methyl-5-(phosphooxymethyl)pyrimidine + phosphate + H(+). Its function is as follows. Catalyzes the hydrolysis of 4-amino-2-methyl-5-hydroxymethylpyrimidine pyrophosphate (HMP-PP) to 4-amino-2-methyl-5-hydroxymethylpyrimidine phosphate (HMP-P). The polypeptide is HMP-PP phosphatase (Yersinia enterocolitica serotype O:8 / biotype 1B (strain NCTC 13174 / 8081)).